The sequence spans 747 residues: Protein MTSS 2 (747 aa).

Positions 1–252 (METAEKECGA…EQVIKDLKGS (252 aa)) constitute an IMD domain. A coiled-coil region spans residues 135 to 159 (EIKKKSSDTLKLQKKARKELLGKGD). 3 stretches are compositionally biased toward low complexity: residues 256–284 (WSYQ…SSSS), 321–332 (SSVSSHDSGFVS), and 349–367 (TSQK…TCQS). 4 disordered regions span residues 256–302 (WSYQ…YSPS), 318–441 (ARLS…EEVS), 457–522 (LEHQ…RNSN), and 543–599 (PTAG…PTVP). Thr260 bears the Phosphothreonine mark. Ser264 is subject to Phosphoserine. Residues 368-378 (VSECSSPTSDW) are compositionally biased toward polar residues. A compositionally biased stretch (basic and acidic residues) spans 397–406 (DRVELLRDTE). Position 441 is a phosphoserine (Ser441). Residues 466-479 (SLQYSSGYSTQTTT) show a composition bias toward low complexity. The segment covering 480 to 492 (PSCSEDTIPSQGS) has biased composition (polar residues). Phosphoserine is present on residues Ser579, Ser601, Ser612, Ser624, Ser634, and Ser639. 2 disordered regions span residues 638–664 (LSLP…EDEQ) and 691–720 (GQFP…DPPA). Thr643 carries the phosphothreonine modification. Composition is skewed to low complexity over residues 646-659 (GSPS…PGAG) and 696-707 (PTALSATPTEET). The WH2 domain occupies 719–736 (PAEDMLVAIRRGVRLRRT).

The protein belongs to the MTSS family. As to quaternary structure, interacts (via IMD domain) with RAC1; this interaction may be important to potentiate PDGF-induced RAC1 activation.

Its subcellular location is the cytoplasm. The protein resides in the cell projection. The protein localises to the ruffle. In terms of biological role, involved in plasma membrane dynamics. Potentiated PDGF-mediated formation of membrane ruffles and lamellipodia in fibroblasts, acting via RAC1 activation. May function in actin bundling. This is Protein MTSS 2 from Homo sapiens (Human).